The following is a 64-amino-acid chain: Small ribosomal subunit protein bS21 (64 aa).

Belongs to the bacterial ribosomal protein bS21 family.

This is Small ribosomal subunit protein bS21 from Sulfurihydrogenibium sp. (strain YO3AOP1).